The chain runs to 297 residues: MKLYDLKAQGLDLQENIPLSRYTFTQTGGPAEYLAFPKTLAELKELLAAAKEDQLPITVIGNASNLIIRDKGIKGLVIILTEMKEIKVEADKVHAQAGARIIDTSFAAGEAGLSGLEFAAGIPGSVGGAVFMNAGAYGGETKDCLESATVVTRDGEVKTYTNAELHFSYRHSLLQENDEIVIAATFALKAGDKATILDQMNYLNALRSYKQPLEYPSCGSVFKRPTGHFVGPMLIKAGLQGKQIGGAQVSTKHAGFIVNKGGATATDYLNLIHYIQKTIKEKDGIALQTEVRIIGEE.

The region spanning 26–191 is the FAD-binding PCMH-type domain; sequence QTGGPAEYLA…IAATFALKAG (166 aa). R170 is an active-site residue. S220 (proton donor) is an active-site residue. The active site involves E290.

Belongs to the MurB family. Requires FAD as cofactor.

It is found in the cytoplasm. The catalysed reaction is UDP-N-acetyl-alpha-D-muramate + NADP(+) = UDP-N-acetyl-3-O-(1-carboxyvinyl)-alpha-D-glucosamine + NADPH + H(+). Its pathway is cell wall biogenesis; peptidoglycan biosynthesis. In terms of biological role, cell wall formation. This Lactobacillus delbrueckii subsp. bulgaricus (strain ATCC 11842 / DSM 20081 / BCRC 10696 / JCM 1002 / NBRC 13953 / NCIMB 11778 / NCTC 12712 / WDCM 00102 / Lb 14) protein is UDP-N-acetylenolpyruvoylglucosamine reductase.